The chain runs to 336 residues: Probable ADP-ribosylation factor GTPase-activating protein AGD13 (336 aa).

One can recognise an Arf-GAP domain in the interval 15 to 137; it reads KRRIRDLLNQ…EFLKPSLRIT (123 aa). The C4-type zinc-finger motif lies at 30 to 53; it reads CADCGASDPKWASANIGVFICLKC. One can recognise a C2 domain in the interval 162 to 280; it reads RTNSSSQTMF…AMAFGDPEMF (119 aa). The Ca(2+) site is built by D249, S252, and D255.

The cofactor is Ca(2+).

Functionally, GTPase-activating protein (GAP) for ADP ribosylation factor (ARF). The sequence is that of Probable ADP-ribosylation factor GTPase-activating protein AGD13 (AGD13) from Arabidopsis thaliana (Mouse-ear cress).